Reading from the N-terminus, the 292-residue chain is 4-hydroxy-tetrahydrodipicolinate synthase 2 (292 aa).

Threonine 46 is a binding site for pyruvate. Residue tyrosine 134 is the Proton donor/acceptor of the active site. Lysine 162 functions as the Schiff-base intermediate with substrate in the catalytic mechanism. Valine 204 contacts pyruvate.

The protein belongs to the DapA family. In terms of assembly, homotetramer; dimer of dimers.

It localises to the cytoplasm. It catalyses the reaction L-aspartate 4-semialdehyde + pyruvate = (2S,4S)-4-hydroxy-2,3,4,5-tetrahydrodipicolinate + H2O + H(+). Its pathway is amino-acid biosynthesis; L-lysine biosynthesis via DAP pathway; (S)-tetrahydrodipicolinate from L-aspartate: step 3/4. In terms of biological role, catalyzes the condensation of (S)-aspartate-beta-semialdehyde [(S)-ASA] and pyruvate to 4-hydroxy-tetrahydrodipicolinate (HTPA). The protein is 4-hydroxy-tetrahydrodipicolinate synthase 2 of Halalkalibacterium halodurans (strain ATCC BAA-125 / DSM 18197 / FERM 7344 / JCM 9153 / C-125) (Bacillus halodurans).